A 679-amino-acid chain; its full sequence is Methionine--tRNA ligase (679 aa).

A 'HIGH' region motif is present at residues 14 to 24 (PYANGSIHLGH). Zn(2+) is bound by residues Cys145, Cys148, Cys158, and Cys161. A 'KMSKS' region motif is present at residues 331–335 (KMSKS). Lys334 provides a ligand contact to ATP. One can recognise a tRNA-binding domain in the interval 577–679 (TFAAVDLRIA…NGAKPGQRVM (103 aa)).

This sequence belongs to the class-I aminoacyl-tRNA synthetase family. MetG type 1 subfamily. Homodimer. Requires Zn(2+) as cofactor.

Its subcellular location is the cytoplasm. The enzyme catalyses tRNA(Met) + L-methionine + ATP = L-methionyl-tRNA(Met) + AMP + diphosphate. Is required not only for elongation of protein synthesis but also for the initiation of all mRNA translation through initiator tRNA(fMet) aminoacylation. The sequence is that of Methionine--tRNA ligase from Stutzerimonas stutzeri (strain A1501) (Pseudomonas stutzeri).